Consider the following 92-residue polypeptide: Cell division protein FtsL (92 aa).

At 1–3 (MGR) the chain is on the cytoplasmic side. The helical transmembrane segment at 4–21 (ISLIVAALLMLSAISLVT) threads the bilayer. Topologically, residues 22–92 (SRYQSRQLFI…YMNQPAGGAQ (71 aa)) are periplasmic.

This sequence belongs to the FtsL family. As to quaternary structure, part of a complex composed of FtsB, FtsL and FtsQ.

The protein localises to the cell inner membrane. Functionally, essential cell division protein. May link together the upstream cell division proteins, which are predominantly cytoplasmic, with the downstream cell division proteins, which are predominantly periplasmic. The protein is Cell division protein FtsL of Bordetella pertussis (strain Tohama I / ATCC BAA-589 / NCTC 13251).